The chain runs to 164 residues: Phosphopantetheine adenylyltransferase (164 aa).

It belongs to the eukaryotic CoaD family.

The protein resides in the cytoplasm. It catalyses the reaction (R)-4'-phosphopantetheine + ATP + H(+) = 3'-dephospho-CoA + diphosphate. Its pathway is cofactor biosynthesis; coenzyme A biosynthesis. Functionally, reversibly transfers an adenylyl group from ATP to 4'-phosphopantetheine, yielding dephospho-CoA (dPCoA) and pyrophosphate. This Methanothermobacter thermautotrophicus (strain ATCC 29096 / DSM 1053 / JCM 10044 / NBRC 100330 / Delta H) (Methanobacterium thermoautotrophicum) protein is Phosphopantetheine adenylyltransferase.